The following is a 202-amino-acid chain: Protein GrpE 1 (202 aa).

It belongs to the GrpE family. In terms of assembly, homodimer.

It is found in the cytoplasm. Its function is as follows. Participates actively in the response to hyperosmotic and heat shock by preventing the aggregation of stress-denatured proteins, in association with DnaK and GrpE. It is the nucleotide exchange factor for DnaK and may function as a thermosensor. Unfolded proteins bind initially to DnaJ; upon interaction with the DnaJ-bound protein, DnaK hydrolyzes its bound ATP, resulting in the formation of a stable complex. GrpE releases ADP from DnaK; ATP binding to DnaK triggers the release of the substrate protein, thus completing the reaction cycle. Several rounds of ATP-dependent interactions between DnaJ, DnaK and GrpE are required for fully efficient folding. The polypeptide is Protein GrpE 1 (Buchnera aphidicola subsp. Schizaphis graminum (strain Sg)).